The chain runs to 354 residues: Probable butyrate kinase (354 aa).

It belongs to the acetokinase family.

The protein resides in the cytoplasm. The catalysed reaction is butanoate + ATP = butanoyl phosphate + ADP. The protein is Probable butyrate kinase of Phocaeicola vulgatus (strain ATCC 8482 / DSM 1447 / JCM 5826 / CCUG 4940 / NBRC 14291 / NCTC 11154) (Bacteroides vulgatus).